Reading from the N-terminus, the 278-residue chain is Small ribosomal subunit biogenesis GTPase RsgA (278 aa).

The 157-residue stretch at 62–218 (KNELTRPRVA…ICDTPGFNVI (157 aa)) folds into the CP-type G domain. Residues 112–115 (TKTD) and 162–170 (GQSGVGKSS) each bind GTP. The Zn(2+) site is built by C241, C246, H248, and C254.

This sequence belongs to the TRAFAC class YlqF/YawG GTPase family. RsgA subfamily. In terms of assembly, monomer. Associates with 30S ribosomal subunit, binds 16S rRNA. Zn(2+) serves as cofactor.

It localises to the cytoplasm. Its function is as follows. One of several proteins that assist in the late maturation steps of the functional core of the 30S ribosomal subunit. Helps release RbfA from mature subunits. May play a role in the assembly of ribosomal proteins into the subunit. Circularly permuted GTPase that catalyzes slow GTP hydrolysis, GTPase activity is stimulated by the 30S ribosomal subunit. This is Small ribosomal subunit biogenesis GTPase RsgA from Mycoplasma genitalium (strain ATCC 33530 / DSM 19775 / NCTC 10195 / G37) (Mycoplasmoides genitalium).